We begin with the raw amino-acid sequence, 880 residues long: Probable LRR receptor-like serine/threonine-protein kinase At2g28960 (880 aa).

A signal peptide spans 1-24 (MEGRRQRLLVFIFGALAITHLVQA). Topologically, residues 25–511 (QPPDQRGFIS…NNNNQTYIVP (487 aa)) are extracellular. N-linked (GlcNAc...) asparagine glycans are attached at residues N180, N201, N228, N254, N287, N403, N430, and N441. 3 LRR repeats span residues 409 to 430 (RIIS…AFQN), 433 to 455 (ELRK…LASM), and 457 to 476 (SLSI…PKLL). N505 carries N-linked (GlcNAc...) asparagine glycosylation. Residues 512-532 (VVASVASVLIIIAVLILILVF) traverse the membrane as a helical segment. Residues 533–880 (KKRRPTQVDS…FTTEINPKAR (348 aa)) are Cytoplasmic-facing. Phosphothreonine is present on T564. The Protein kinase domain occupies 573–846 (DNFERVLGEG…QVTNELKQCL (274 aa)). ATP is bound by residues 579 to 587 (LGEGGFGVV) and K601. Residue Y646 is modified to Phosphotyrosine. D698 functions as the Proton acceptor in the catalytic mechanism. S732 is modified (phosphoserine). Residues T733 and T738 each carry the phosphothreonine modification. The residue at position 746 (Y746) is a Phosphotyrosine. Residues 854–880 (GVREDMGSRSSVEMSTSFTTEINPKAR) form a disordered region. The span at 861–880 (SRSSVEMSTSFTTEINPKAR) shows a compositional bias: polar residues.

This sequence belongs to the protein kinase superfamily. Ser/Thr protein kinase family.

Its subcellular location is the membrane. The enzyme catalyses L-seryl-[protein] + ATP = O-phospho-L-seryl-[protein] + ADP + H(+). It carries out the reaction L-threonyl-[protein] + ATP = O-phospho-L-threonyl-[protein] + ADP + H(+). This Arabidopsis thaliana (Mouse-ear cress) protein is Probable LRR receptor-like serine/threonine-protein kinase At2g28960.